The following is a 958-amino-acid chain: DNA repair and recombination protein RDH54 (958 aa).

Residues 189-217 are disordered; that stretch reads EALSQNMGNPSPPTTSTTETVPSTKNDGG. Low complexity predominate over residues 202–212; sequence TTSTTETVPST. The 189-residue stretch at 333–521 folds into the Helicase ATP-binding domain; that stretch reads LENDSDISGC…FTIIDFINPG (189 aa). 380 to 387 contributes to the ATP binding site; it reads IPLTGLCK. The DEGH box motif lies at 506 to 509; it reads NDLN. Residue Lys-649 forms a Glycyl lysine isopeptide (Lys-Gly) (interchain with G-Cter in ubiquitin) linkage. The Helicase C-terminal domain occupies 665–824; sequence KLKVLMTLLE…DSEMRNKESS (160 aa).

This sequence belongs to the SNF2/RAD54 helicase family. Interacts with RAD51 and DMC1.

It localises to the nucleus. The enzyme catalyses ATP + H2O = ADP + phosphate + H(+). Functionally, involved in the recombinational repair of double-strand breaks (DSB) in DNA during mitosis and meiosis. Has DNA dependent ATPase activity. Promotes D-loop (displacement loop) formation with RAD51 recombinase. Modifies the topology of double-stranded DNA during the D-loop reaction to facilitate the invasion of the homologous duplex molecule by the initiating single-stranded DNA substrate. Required for adaptation from G2/M checkpoint arrest induced by a double strand break, by participating in monitoring the extent of single-stranded DNA produced by resection of DNA ends. This role is distinct from its roles in recombination. Promotes colocalization of RAD51 and DMC1 during meiotic recombination. Involved in crossover interference. The protein is DNA repair and recombination protein RDH54 (RDH54) of Saccharomyces cerevisiae (strain ATCC 204508 / S288c) (Baker's yeast).